Consider the following 193-residue polypeptide: Frataxin, mitochondrial (193 aa).

Residues 1–72 (MIFNFLNKAS…KQQQQLSKSF (72 aa)) constitute a mitochondrion transit peptide.

Belongs to the frataxin family. As to quaternary structure, monomer. Oligomer.

It is found in the mitochondrion. It catalyses the reaction 4 Fe(2+) + O2 + 4 H(+) = 4 Fe(3+) + 2 H2O. Promotes the biosynthesis of heme as well as the assembly and repair of iron-sulfur clusters by delivering Fe(2+) to proteins involved in these pathways. May play a role in the protection against iron-catalyzed oxidative stress through its ability to catalyze the oxidation of Fe(2+) to Fe(3+). May be able to store large amounts of the metal in the form of a ferrihydrite mineral by oligomerization. The chain is Frataxin, mitochondrial (fxn) from Dictyostelium discoideum (Social amoeba).